The following is a 944-amino-acid chain: Neutral alpha-glucosidase AB (944 aa).

Positions M1–G28 are cleaved as a signal peptide. A disulfide bridge connects residues C41 and C47. A Phosphoserine modification is found at S52. N97 carries an N-linked (GlcNAc...) asparagine glycan. The interval Q181–P238 is disordered. Basic and acidic residues predominate over residues E203–S236. Substrate is bound by residues D283 and D429. The active-site Nucleophile is D542. R602 lines the substrate pocket. The active-site Proton donor is the D618. A disulfide bond links C633 and C644. H676 contributes to the substrate binding site.

This sequence belongs to the glycosyl hydrolase 31 family. Heterodimer of a catalytic alpha subunit (GANAB) and a beta subunit (PRKCSH). Binds glycosylated PTPRC. Detected in placenta. Isoform 1 and isoform 2 are expressed in the kidney and liver.

The protein resides in the endoplasmic reticulum. It is found in the golgi apparatus. The protein localises to the melanosome. It carries out the reaction N(4)-(alpha-D-Glc-(1-&gt;3)-alpha-D-Man-(1-&gt;2)-alpha-D-Man-(1-&gt;2)-alpha-D-Man-(1-&gt;3)-[alpha-D-Man-(1-&gt;2)-alpha-D-Man-(1-&gt;3)-[alpha-D-Man-(1-&gt;2)-alpha-D-Man-(1-&gt;6)]-alpha-D-Man-(1-&gt;6)]-beta-D-Man-(1-&gt;4)-beta-D-GlcNAc-(1-&gt;4)-beta-D-GlcNAc)-L-asparaginyl-[protein] + H2O = N(4)-(alpha-D-Man-(1-&gt;2)-alpha-D-Man-(1-&gt;2)-alpha-D-Man-(1-&gt;3)-[alpha-D-Man-(1-&gt;2)-alpha-D-Man-(1-&gt;3)-[alpha-D-Man-(1-&gt;2)-alpha-D-Man-(1-&gt;6)]-alpha-D-Man-(1-&gt;6)]-beta-D-Man-(1-&gt;4)-beta-D-GlcNAc-(1-&gt;4)-beta-D-GlcNAc)-L-asparaginyl-[protein] (N-glucan mannose isomer 9A1,2,3B1,2,3) + beta-D-glucose. The catalysed reaction is N(4)-(alpha-D-Glc-(1-&gt;3)-alpha-D-Glc-(1-&gt;3)-alpha-D-Man-(1-&gt;2)-alpha-D-Man-(1-&gt;2)-alpha-D-Man-(1-&gt;3)-[alpha-D-Man-(1-&gt;2)-alpha-D-Man-(1-&gt;3)-[alpha-D-Man-(1-&gt;2)-alpha-D-Man-(1-&gt;6)]-alpha-D-Man-(1-&gt;6)]-beta-D-Man-(1-&gt;4)-beta-D-GlcNAc-(1-&gt;4)-beta-D-GlcNAc)-L-asparaginyl-[protein] + H2O = N(4)-(alpha-D-Glc-(1-&gt;3)-alpha-D-Man-(1-&gt;2)-alpha-D-Man-(1-&gt;2)-alpha-D-Man-(1-&gt;3)-[alpha-D-Man-(1-&gt;2)-alpha-D-Man-(1-&gt;3)-[alpha-D-Man-(1-&gt;2)-alpha-D-Man-(1-&gt;6)]-alpha-D-Man-(1-&gt;6)]-beta-D-Man-(1-&gt;4)-beta-D-GlcNAc-(1-&gt;4)-beta-D-GlcNAc)-L-asparaginyl-[protein] + beta-D-glucose. The protein operates within glycan metabolism; N-glycan metabolism. With respect to regulation, inhibited by deoxynojirimycin. Catalytic subunit of glucosidase II that cleaves sequentially the 2 innermost alpha-1,3-linked glucose residues from the Glc(2)Man(9)GlcNAc(2) oligosaccharide precursor of immature glycoproteins. Required for PKD1/Polycystin-1 and PKD2/Polycystin-2 maturation and localization to the cell surface and cilia. The sequence is that of Neutral alpha-glucosidase AB from Homo sapiens (Human).